A 585-amino-acid polypeptide reads, in one-letter code: Rhizobactin siderophore biosynthesis protein RhbC (585 aa).

It belongs to the IucA/IucC family.

It functions in the pathway siderophore biosynthesis; rhizobactin biosynthesis. The protein is Rhizobactin siderophore biosynthesis protein RhbC (rhbC) of Rhizobium meliloti (strain 1021) (Ensifer meliloti).